The following is a 100-amino-acid chain: Small ribosomal subunit protein uS14c (100 aa).

The protein belongs to the universal ribosomal protein uS14 family. In terms of assembly, part of the 30S ribosomal subunit.

The protein resides in the plastid. Its subcellular location is the chloroplast. Binds 16S rRNA, required for the assembly of 30S particles. In Illicium oligandrum (Star anise), this protein is Small ribosomal subunit protein uS14c.